The following is a 625-amino-acid chain: MNKQTLSFQAEVQQLLHLVTHSLYSNKEIFLRELISNASDACDKLRFEALNDAALYEDASTLEVRVSFDKEARTITIADNGIGMSADEVIANLGTIAKSGTREFVGKLSGEQAKDAQLIGQFGVGFYSGYIVADRITVESRRAGLKAEEGVRWSSAGTGDFEVENLVRAQRGTSVTLHLRDGEDEFLSAWKLKSVIGRYSDHISLPILMRGQVWDAEKSEYVTQDAWETVNKAAALWARPKSEITDAEYKSFYEQFSHDSTPPLAYTHNRVEGRSEYIQLLYLPAKAPHDLWNRDRQGGIKLYVKRVFIMDDAQALMPSYLRFVKGVIDSSDLPLNVSRELLQESRDVKAIREGSTKRVLGMLEEMAGSEDAARRDQYAAFWREFGAVLKEGVGEDHANRERLAKLLRFASTQADEGVSLADYLARMKDGQEAIYYITADTTAAARHSPQLEVFRKKGIEVLLLTDRVDEWMLSHLFEFEGKPLQSVAKGAVDLGKLQDEGEKQQAEAAAEAFKPVLEKLKDTLKERAKDVRVTTRLVDSPACLVVEDGDISGHLARLLKQAGQSAPTSLPILEVNTEHALVKRLDGSERFDDLAQVLFDQAVLAEGGQLDDPAAYVQRVNRLLV.

An a; substrate-binding region spans residues 1-339 (MNKQTLSFQA…SSDLPLNVSR (339 aa)). The b stretch occupies residues 340–557 (ELLQESRDVK…DGDISGHLAR (218 aa)). The segment at 558 to 625 (LLKQAGQSAP…YVQRVNRLLV (68 aa)) is c.

The protein belongs to the heat shock protein 90 family. In terms of assembly, homodimer.

Its subcellular location is the cytoplasm. Functionally, molecular chaperone. Has ATPase activity. This chain is Chaperone protein HtpG, found in Methylibium petroleiphilum (strain ATCC BAA-1232 / LMG 22953 / PM1).